Here is a 278-residue protein sequence, read N- to C-terminus: Formamidopyrimidine-DNA glycosylase (278 aa).

Proline 2 serves as the catalytic Schiff-base intermediate with DNA. The active-site Proton donor is the glutamate 3. Residue lysine 59 is the Proton donor; for beta-elimination activity of the active site. Residues histidine 93, arginine 112, and arginine 153 each contribute to the DNA site. The segment at 238–272 (NVYDRAGEPCPRCQSTIERIVVAQRSTYFCPTCQI) adopts an FPG-type zinc-finger fold. Arginine 262 functions as the Proton donor; for delta-elimination activity in the catalytic mechanism.

This sequence belongs to the FPG family. As to quaternary structure, monomer. Zn(2+) is required as a cofactor.

It carries out the reaction Hydrolysis of DNA containing ring-opened 7-methylguanine residues, releasing 2,6-diamino-4-hydroxy-5-(N-methyl)formamidopyrimidine.. The catalysed reaction is 2'-deoxyribonucleotide-(2'-deoxyribose 5'-phosphate)-2'-deoxyribonucleotide-DNA = a 3'-end 2'-deoxyribonucleotide-(2,3-dehydro-2,3-deoxyribose 5'-phosphate)-DNA + a 5'-end 5'-phospho-2'-deoxyribonucleoside-DNA + H(+). Involved in base excision repair of DNA damaged by oxidation or by mutagenic agents. Acts as a DNA glycosylase that recognizes and removes damaged bases. Has a preference for oxidized purines, such as 7,8-dihydro-8-oxoguanine (8-oxoG). Has AP (apurinic/apyrimidinic) lyase activity and introduces nicks in the DNA strand. Cleaves the DNA backbone by beta-delta elimination to generate a single-strand break at the site of the removed base with both 3'- and 5'-phosphates. The protein is Formamidopyrimidine-DNA glycosylase of Chloroflexus aurantiacus (strain ATCC 29366 / DSM 635 / J-10-fl).